A 37-amino-acid polypeptide reads, in one-letter code: Cytochrome b6-f complex subunit 5 (37 aa).

The chain crosses the membrane as a helical span at residues 5-25; it reads LLCGIVLGLIPITLAGLFMAA.

Belongs to the PetG family. In terms of assembly, the 4 large subunits of the cytochrome b6-f complex are cytochrome b6, subunit IV (17 kDa polypeptide, PetD), cytochrome f and the Rieske protein, while the 4 small subunits are PetG, PetL, PetM and PetN. The complex functions as a dimer.

The protein localises to the cellular thylakoid membrane. Its function is as follows. Component of the cytochrome b6-f complex, which mediates electron transfer between photosystem II (PSII) and photosystem I (PSI), cyclic electron flow around PSI, and state transitions. PetG is required for either the stability or assembly of the cytochrome b6-f complex. The polypeptide is Cytochrome b6-f complex subunit 5 (Synechococcus elongatus (strain ATCC 33912 / PCC 7942 / FACHB-805) (Anacystis nidulans R2)).